The following is a 640-amino-acid chain: METVVRSCPFLSRVPQAFLQKAGKSLLFYAQNCPKMMEVGAKPAPRALSTAAVHYQQIKETPPASEKDKTAKAKVQQTPDGSQQSPDGTQLPSGHPLPATSQGTASKCPFLAAQMNQRGSSVFCKASLELQEDVQEMNAVRKEVAETSGGPSVVSVKTDGGDPSGLLKNFQDIMQKQRPERVSHLLQDDLPKSVSTFQYDRFFEKKIDEKKNDHTYRVFKTVNRRAHIFPMADDYSDSLITKKQVSVWCSNDYLGMSRHPRVCGAVMDTLKQHGAGAGGTRNISGTSKFHVDLERELADLHGKDAALLFSSCFVANDSTLFTLAKMMPGCEIYSDSGNHASMIQGIRNSRVPKYIFRHNDVSHLRELLQRSDPSVPKIVAFETVHSMDGAVCPLEELCDVAHEFGAITFVDEVHAVGLYGARGGGIGDRDGVMPKMDIISGTLGKAFGCVGGYIASTSSLIDTVRSYAAGFIFTTSLPPMLLAGALESVRILKSAEGRVLRRQHQRNVKLMRQMLMDAGLPVVHCPSHIIPVRVADAAKNTEVCDELMSRHNIYVQAINYPTVPRGEELLRIAPTPHHTPQMMNYFLENLLVTWKQVGLELEPHSSAECNFCRRPLHFEVMSEREKSYFSGLSKLVSAQA.

The N-terminal 56 residues, 1-56, are a transit peptide targeting the mitochondrion; the sequence is METVVRSCPFLSRVPQAFLQKAGKSLLFYAQNCPKMMEVGAKPAPRALSTAAVHYQ. Disordered stretches follow at residues 60–103 and 143–163; these read ETPP…TSQG and EVAE…GGDP. A compositionally biased stretch (polar residues) spans 75-92; that stretch reads VQQTPDGSQQSPDGTQLP. 3 residues coordinate substrate: Arg-217, Ser-334, and Lys-353. 3 residues coordinate pyridoxal 5'-phosphate: Ser-386, His-414, and Thr-442. The active site involves Lys-445. N6-(pyridoxal phosphate)lysine is present on Lys-445. Thr-474 and Thr-475 together coordinate pyridoxal 5'-phosphate. A substrate-binding site is contributed by Thr-562. Position 576 is a hydroxyproline (Pro-576).

Belongs to the class-II pyridoxal-phosphate-dependent aminotransferase family. Homodimer. Interacts (hydroxylated form) with VHL. The cofactor is pyridoxal 5'-phosphate. In normoxia, is hydroxylated at Pro-576, promoting interaction with VHL, initiating ubiquitination and subsequent degradation via the proteasome. In terms of processing, ubiquitinated; in normoxia following hydroxylation and interaction with VHL, leading to its subsequent degradation via the proteasome.

The protein resides in the mitochondrion inner membrane. The catalysed reaction is succinyl-CoA + glycine + H(+) = 5-aminolevulinate + CO2 + CoA. The protein operates within porphyrin-containing compound metabolism; protoporphyrin-IX biosynthesis; 5-aminolevulinate from glycine: step 1/1. Functionally, catalyzes the pyridoxal 5'-phosphate (PLP)-dependent condensation of succinyl-CoA and glycine to form aminolevulinic acid (ALA), with CoA and CO2 as by-products. The sequence is that of 5-aminolevulinate synthase, non-specific, mitochondrial (ALAS1) from Pongo abelii (Sumatran orangutan).